A 170-amino-acid polypeptide reads, in one-letter code: uncharacterized protein (170 aa).

Over 1-15 (MFLTSPFESCIVLSS) the chain is Cytoplasmic. A helical membrane pass occupies residues 16-36 (LIAGLLFSLSTGFVGILGVFA). The Extracellular segment spans residues 37–76 (SLFETELSVSPKRLSLSSLSWPKTFWALLSSVEGVSWESS). A helical transmembrane segment spans residues 77–97 (LFACIVGCCFAVTVIASLSAS). Residues 98 to 119 (RVFGTVASSFRDSSCCCDSSPA) are Cytoplasmic-facing. The helical transmembrane segment at 120–140 (VSVLATPATAALALLSLLLSL) threads the bilayer. The Extracellular portion of the chain corresponds to 141–170 (PCWSTSTEAFTVDPSPSVFSMLANRITIGL).

The protein resides in the membrane. This is an uncharacterized protein from Saccharomyces cerevisiae (strain ATCC 204508 / S288c) (Baker's yeast).